A 334-amino-acid chain; its full sequence is FAD:protein FMN transferase (334 aa).

Positions Met-1–Gly-16 are cleaved as a signal peptide. A lipid anchor (N-palmitoyl cysteine) is attached at Cys-17. Cys-17 carries the S-diacylglycerol cysteine lipid modification. FAD is bound by residues Met-31, Tyr-69, Ala-110–Asp-112, and Asp-168. Thr-171 provides a ligand contact to Mg(2+). FAD is bound by residues Lys-174 and Ile-259. Asp-285 and Thr-289 together coordinate Mg(2+).

This sequence belongs to the ApbE family. Requires Mg(2+) as cofactor.

It localises to the cell inner membrane. It carries out the reaction L-threonyl-[protein] + FAD = FMN-L-threonyl-[protein] + AMP + H(+). Flavin transferase that catalyzes the transfer of the FMN moiety of FAD and its covalent binding to the hydroxyl group of a threonine residue in a target flavoprotein such as NqrB and NqrC, two subunits of the NQR complex. Cannot use directly FMN instead of FAD as substrate. The polypeptide is FAD:protein FMN transferase (Vibrio cholerae serotype O1 (strain ATCC 39541 / Classical Ogawa 395 / O395)).